The primary structure comprises 197 residues: Large ribosomal subunit protein uL22 (197 aa).

The interval 118–197 (ESRPAKDQRS…ETSAAKGGSD (80 aa)) is disordered. The segment covering 149–165 (APAKKAAAKAPAKKAPA) has biased composition (low complexity). Residues 172-183 (TPAKKAPAKKAP) are compositionally biased toward basic residues. The segment covering 184–197 (AKASETSAAKGGSD) has biased composition (low complexity).

This sequence belongs to the universal ribosomal protein uL22 family. As to quaternary structure, part of the 50S ribosomal subunit.

This protein binds specifically to 23S rRNA; its binding is stimulated by other ribosomal proteins, e.g. L4, L17, and L20. It is important during the early stages of 50S assembly. It makes multiple contacts with different domains of the 23S rRNA in the assembled 50S subunit and ribosome. Its function is as follows. The globular domain of the protein is located near the polypeptide exit tunnel on the outside of the subunit, while an extended beta-hairpin is found that lines the wall of the exit tunnel in the center of the 70S ribosome. The sequence is that of Large ribosomal subunit protein uL22 from Mycobacterium bovis (strain ATCC BAA-935 / AF2122/97).